The following is a 252-amino-acid chain: MLTKRIIPCLDVKGGRVVKGVNFKDLRDEGDPVELARYYDREGADELVFLDITASAENRGIVIDMVEKTAASVFIPFTIGGGIRTISDMKAILNAGADKVSINSAAVKNPGLIAEGARVFGSQCIVVAIDCCRKNGNWEVYINGGRTVTGLDAIKWAQKVEELGAGEILLTSMDADGTKDGYDTELLAAVSTAVEIPVIASGGAGMPEHLREAIVEGQADAVLAASIFHEKTYSVSEVKEYLAGHGIPVRIE.

Catalysis depends on residues Asp11 and Asp130.

The protein belongs to the HisA/HisF family. Heterodimer of HisH and HisF.

Its subcellular location is the cytoplasm. It carries out the reaction 5-[(5-phospho-1-deoxy-D-ribulos-1-ylimino)methylamino]-1-(5-phospho-beta-D-ribosyl)imidazole-4-carboxamide + L-glutamine = D-erythro-1-(imidazol-4-yl)glycerol 3-phosphate + 5-amino-1-(5-phospho-beta-D-ribosyl)imidazole-4-carboxamide + L-glutamate + H(+). The protein operates within amino-acid biosynthesis; L-histidine biosynthesis; L-histidine from 5-phospho-alpha-D-ribose 1-diphosphate: step 5/9. Its function is as follows. IGPS catalyzes the conversion of PRFAR and glutamine to IGP, AICAR and glutamate. The HisF subunit catalyzes the cyclization activity that produces IGP and AICAR from PRFAR using the ammonia provided by the HisH subunit. This chain is Imidazole glycerol phosphate synthase subunit HisF, found in Halothermothrix orenii (strain H 168 / OCM 544 / DSM 9562).